Reading from the N-terminus, the 154-residue chain is Methylglyoxal synthase (154 aa).

Residues 1-154 enclose the MGS-like domain; the sequence is MELTTRTIAA…RYMQQRLDLK (154 aa). Residues histidine 19, lysine 23, 45–48, and 65–66 contribute to the substrate site; these read TGTT and SG. Aspartate 71 acts as the Proton donor/acceptor in catalysis. Position 98 (histidine 98) interacts with substrate.

Belongs to the methylglyoxal synthase family.

The enzyme catalyses dihydroxyacetone phosphate = methylglyoxal + phosphate. Catalyzes the formation of methylglyoxal from dihydroxyacetone phosphate. The sequence is that of Methylglyoxal synthase from Yersinia pseudotuberculosis serotype O:1b (strain IP 31758).